Reading from the N-terminus, the 197-residue chain is MSEFLNTHNASILLSAVNKSHYPQDDLPEIALAGRSNVGKSSFINTLLGRKNLARTSSKPGKTQSLNFYNIDDKLRFVDVPGYGYAKVSKKERAKWGKMIEEYLTSRENLRAVVSLVDFRHDPSSDDVQMYDFLKYYEIPVILVATKADKVPRGKWNKQESAIKKKLDFDSNDAFIIFSSVDRTGLDTSWDAILESL.

Residues 26–197 (DLPEIALAGR…TSWDAILESL (172 aa)) enclose the EngB-type G domain. Residues 34 to 41 (GRSNVGKS), 61 to 65 (GKTQS), 79 to 82 (DVPG), 146 to 149 (TKAD), and 178 to 180 (FSS) contribute to the GTP site. Positions 41 and 63 each coordinate Mg(2+).

It belongs to the TRAFAC class TrmE-Era-EngA-EngB-Septin-like GTPase superfamily. EngB GTPase family. The cofactor is Mg(2+).

Necessary for normal cell division and for the maintenance of normal septation. This is Probable GTP-binding protein EngB from Streptococcus mutans serotype c (strain ATCC 700610 / UA159).